The sequence spans 330 residues: Phosphate acyltransferase (330 aa).

This sequence belongs to the PlsX family. As to quaternary structure, homodimer. Probably interacts with PlsY.

Its subcellular location is the cytoplasm. The catalysed reaction is a fatty acyl-[ACP] + phosphate = an acyl phosphate + holo-[ACP]. Its pathway is lipid metabolism; phospholipid metabolism. Functionally, catalyzes the reversible formation of acyl-phosphate (acyl-PO(4)) from acyl-[acyl-carrier-protein] (acyl-ACP). This enzyme utilizes acyl-ACP as fatty acyl donor, but not acyl-CoA. This Bacillus cereus (strain ATCC 14579 / DSM 31 / CCUG 7414 / JCM 2152 / NBRC 15305 / NCIMB 9373 / NCTC 2599 / NRRL B-3711) protein is Phosphate acyltransferase.